The chain runs to 1457 residues: ABC transporter G family member 36 (1457 aa).

Positions 14-43 (RLGGSMRGDSGSMWRRGDDVFSRSSREEDD) are disordered. Residues 28–39 (RRGDDVFSRSSR) are compositionally biased toward basic and acidic residues. An ABC transporter 1 domain is found at 164–437 (GNALGILPNR…FESMGFKCPD (274 aa)). Residue 197–204 (GPPGSGKT) coordinates ATP. One can recognise an ABC transmembrane type-2 1 domain in the interval 515–728 (ELLKANIDRE…AQNAISVNEL (214 aa)). The next 7 membrane-spanning stretches (helical) occupy residues 533 to 553 (FVYM…MTLF), 565 to 585 (SGGI…FNGF), 621 to 641 (IPIT…VIGF), 653 to 673 (LLML…GGAA), 677 to 697 (IVAN…GGFI), 706 to 726 (WWIW…ISVN), and 765 to 785 (IGFG…TLAL). The tract at residues 821–841 (SSGSTRRPMGNGTENDSTIVD) is disordered. In terms of domain architecture, ABC transporter 2 spans 860–1112 (LSFDNVRYSV…ELIKYFESIP (253 aa)). 905-912 (GVSGAGKT) provides a ligand contact to ATP. The region spanning 1185–1399 (TQCMACLWKQ…TLYGLVVSQF (215 aa)) is the ABC transmembrane type-2 2 domain. 7 consecutive transmembrane segments (helical) span residues 1209–1229 (FFFT…LGGK), 1244–1264 (YAAV…VVAV), 1292–1312 (IPYT…MIGF), 1319–1339 (FFWY…YGMM), 1349–1369 (IASI…GFVI), 1380–1400 (WYCW…SQFG), and 1429–1449 (WVAT…GFAI).

This sequence belongs to the ABC transporter superfamily. ABCG family. PDR (TC 3.A.1.205) subfamily.

The protein resides in the membrane. May be a general defense protein. This is ABC transporter G family member 36 from Oryza sativa subsp. japonica (Rice).